The chain runs to 281 residues: Pantothenate synthetase (281 aa).

31–38 (MGNLHAGH) contacts ATP. Catalysis depends on histidine 38, which acts as the Proton donor. Glutamine 62 is a binding site for (R)-pantoate. Glutamine 62 contributes to the beta-alanine binding site. 150–153 (GKKD) is an ATP binding site. Glutamine 156 is a binding site for (R)-pantoate. ATP is bound by residues valine 179 and 187-190 (MSSR).

The protein belongs to the pantothenate synthetase family. Homodimer.

It localises to the cytoplasm. It catalyses the reaction (R)-pantoate + beta-alanine + ATP = (R)-pantothenate + AMP + diphosphate + H(+). Its pathway is cofactor biosynthesis; (R)-pantothenate biosynthesis; (R)-pantothenate from (R)-pantoate and beta-alanine: step 1/1. Functionally, catalyzes the condensation of pantoate with beta-alanine in an ATP-dependent reaction via a pantoyl-adenylate intermediate. The polypeptide is Pantothenate synthetase (Xylella fastidiosa (strain M12)).